Consider the following 87-residue polypeptide: MAIKMRLQRFGVHKRPFYRVVASESKNARDGKFLEILGTYDTILDIVELDHNKVQKWLSNGAQPTKTVKKVFKKSKFVAKTNTKVEK.

The protein belongs to the bacterial ribosomal protein bS16 family.

In Onion yellows phytoplasma (strain OY-M), this protein is Small ribosomal subunit protein bS16.